Reading from the N-terminus, the 553-residue chain is Putative transport protein YidE (553 aa).

Transmembrane regions (helical) follow at residues 4–24 (IALT…IGNV), 28–48 (GIGL…HFVS), 65–85 (FGLI…FFAS), 95–115 (LFAV…HKLF), and 158–178 (MSYA…MWML). RCK C-terminal domains follow at residues 191 to 276 (QQHE…VIGQ) and 279 to 361 (DTSL…VLGN). Helical transmembrane passes span 371–391 (MLPV…PVFV), 393–413 (GFPA…ALIL), 439–459 (IVLF…NTLV), 464–484 (LSWI…VGIL), 493–513 (YLTM…LAFA), and 533–553 (LVMF…WSIG).

The protein belongs to the AAE transporter (TC 2.A.81) family. YidE subfamily.

It is found in the cell membrane. The chain is Putative transport protein YidE from Escherichia coli O7:K1 (strain IAI39 / ExPEC).